A 300-amino-acid polypeptide reads, in one-letter code: Protein orai (300 aa).

The Cytoplasmic portion of the chain corresponds to 1-128 (MPRSHDPSRV…SKAQLKASSR (128 aa)). The segment at 58-82 (QPPSSGGGSRNVGGGDGAAGNSKNG) is disordered. Residues 62–75 (SGGGSRNVGGGDGA) show a composition bias toward gly residues. The helical transmembrane segment at 129–146 (TSALLAGFAMVCLVELQY) threads the bilayer. The Extracellular portion of the chain corresponds to 147–153 (DDSTSKP). A helical membrane pass occupies residues 154–174 (LLIVLGVVTSLLVSVHLLALM). Topologically, residues 175-205 (MSTCILPYMEATGCTQDSPHLKLKFYIDLSW) are cytoplasmic. The helical transmembrane segment at 206–226 (LFSTCIGLLLFLVEIGVIFYV) threads the bilayer. Residues 227 to 237 (KFTAVGYPTAG) lie on the Extracellular side of the membrane. Residues 238-258 (YITTAMLIPVGIVFVLFSYLI) form a helical membrane-spanning segment. The Cytoplasmic portion of the chain corresponds to 259–300 (HKNRVSHSLGRFKDKVDTMKQFLDVEANLQKSTIAPSTIRDI).

This sequence belongs to the Orai family.

The protein localises to the membrane. Functionally, ca(2+) release-activated Ca(2+)-like (CRAC-like) channel subunit which mediates Ca(2+) influx and increase in Ca(2+)-selective current by synergy with the Ca(2+) sensor, stim-1. Required for Ca(2+) and IP3-dependent contractile activity of sheath cells and the spermatheca. Affects brood size and somatic cell function. The sequence is that of Protein orai (orai-1) from Caenorhabditis briggsae.